An 856-amino-acid chain; its full sequence is Lon protease (856 aa).

Residues 68-261 (FPVLPLRDIV…KVLGLMESEI (194 aa)) enclose the Lon N-terminal domain. Position 412–419 (412–419 (GPPGVGKT)) interacts with ATP. The 182-residue stretch at 647 to 828 (EDQVGVVTGL…DEVLHHALLR (182 aa)) folds into the Lon proteolytic domain. Catalysis depends on residues serine 734 and lysine 777.

It belongs to the peptidase S16 family. In terms of assembly, homohexamer. Organized in a ring with a central cavity.

It is found in the cytoplasm. It catalyses the reaction Hydrolysis of proteins in presence of ATP.. Its function is as follows. ATP-dependent serine protease that mediates the selective degradation of mutant and abnormal proteins as well as certain short-lived regulatory proteins. Required for cellular homeostasis and for survival from DNA damage and developmental changes induced by stress. Degrades polypeptides processively to yield small peptide fragments that are 5 to 10 amino acids long. Binds to DNA in a double-stranded, site-specific manner. The protein is Lon protease of Azorhizobium caulinodans (strain ATCC 43989 / DSM 5975 / JCM 20966 / LMG 6465 / NBRC 14845 / NCIMB 13405 / ORS 571).